The primary structure comprises 751 residues: Catalase-peroxidase (751 aa).

The segment at 1-21 is disordered; that stretch reads MSNESKCPFHQTAGGGTTNRD. Positions 90-244 form a cross-link, tryptophyl-tyrosyl-methioninium (Trp-Tyr) (with M-270); sequence WHSAGTYRIG…LAAVQMGLIY (155 aa). H91 serves as the catalytic Proton acceptor. A disordered region spans residues 195 to 227; the sequence is YGKDQVKAQPPGQGDLVAEPAKHGEEQNRDLSA. The span at 214 to 227 shows a compositional bias: basic and acidic residues; it reads PAKHGEEQNRDLSA. Positions 244 to 270 form a cross-link, tryptophyl-tyrosyl-methioninium (Tyr-Met) (with W-90); sequence YVNPEGPEGNPDPVASGKDIRETFGRM. A heme b-binding site is contributed by H285. Residues 365–387 are disordered; the sequence is AHQWRPKEGKGAGTVPDAHDPGK.

This sequence belongs to the peroxidase family. Peroxidase/catalase subfamily. In terms of assembly, homodimer or homotetramer. It depends on heme b as a cofactor. In terms of processing, formation of the three residue Trp-Tyr-Met cross-link is important for the catalase, but not the peroxidase activity of the enzyme.

The enzyme catalyses H2O2 + AH2 = A + 2 H2O. It catalyses the reaction 2 H2O2 = O2 + 2 H2O. Bifunctional enzyme with both catalase and broad-spectrum peroxidase activity. The sequence is that of Catalase-peroxidase from Pseudomonas putida (strain ATCC 700007 / DSM 6899 / JCM 31910 / BCRC 17059 / LMG 24140 / F1).